A 92-amino-acid polypeptide reads, in one-letter code: Defensin-like protein 96 (92 aa).

The N-terminal stretch at 1–29 (MGSLRLSTVAIAVVVCLSILLISPTEVDG) is a signal peptide. Intrachain disulfides connect Cys-33-Cys-80, Cys-40-Cys-65, Cys-49-Cys-77, and Cys-53-Cys-79.

This sequence belongs to the DEFL family.

The protein resides in the secreted. The protein is Defensin-like protein 96 of Arabidopsis thaliana (Mouse-ear cress).